The primary structure comprises 315 residues: Olfactory receptor 4K3 (315 aa).

The Extracellular segment spans residues 1 to 25 (MAWSNQSAVTEFILRGLSSSLELQI). An N-linked (GlcNAc...) asparagine glycan is attached at asparagine 5. The chain crosses the membrane as a helical span at residues 26–49 (FYFLFFSIVYAATVLGNLLIVVTI). Over 50–57 (ASEPHLHS) the chain is Cytoplasmic. The chain crosses the membrane as a helical span at residues 58-79 (PMYFLLGNLSFIDMSLASFATP). The Extracellular segment spans residues 80-100 (KMIADFLREHKAISFEGCMTQ). Cysteine 97 and cysteine 189 are disulfide-bonded. Residues 101–120 (MFFLHLLGGAEIVLLISMSF) form a helical membrane-spanning segment. The Cytoplasmic portion of the chain corresponds to 121-139 (DRYVAICKPLHYLTIMSRR). Residues 140 to 158 (MCVGLVILSWIVGIFHALS) form a helical membrane-spanning segment. Residues 159-195 (QLAFTVNLPFCGPNEVDSFFCDLPLVIKLACVDTYIL) are Extracellular-facing. The helical transmembrane segment at 196–219 (GVFMISTSGMIALVCFILLVISYT) threads the bilayer. At 220–235 (IILVTVRQRSSGGSSK) the chain is on the cytoplasmic side. The chain crosses the membrane as a helical span at residues 236 to 258 (ALSTCSAHFTVVTLFFGPCTFIY). Topologically, residues 259 to 269 (VWPFTNFPIDK) are extracellular. Residues 270–289 (VLSVFYTIYTPLLNPVIYTV) traverse the membrane as a helical segment. At 290–315 (RNKDVKYSMRKLSSHIFKSRKTDHTP) the chain is on the cytoplasmic side.

The protein belongs to the G-protein coupled receptor 1 family.

It is found in the cell membrane. Functionally, odorant receptor. This Homo sapiens (Human) protein is Olfactory receptor 4K3 (OR4K3).